Here is a 653-residue protein sequence, read N- to C-terminus: Structural protein ORF653 (653 aa).

Residues 300 to 330 adopt a coiled-coil conformation; the sequence is AKEETKQETKQETGKEEEEKKETKQESQEQL. A compositionally biased stretch (basic and acidic residues) spans 302–326; the sequence is EETKQETKQETGKEEEEKKETKQES. Disordered regions lie at residues 302–329, 344–388, and 626–653; these read EETKQETKQETGKEEEEKKETKQESQEQ, GQPA…ENTP, and AGQQEETDETTEEEEEEEEEGNDTVKLS. Over residues 371 to 381 the composition is skewed to low complexity; the sequence is EENNAEAPQQR. Residues 505-649 are a coiled coil; it reads KEQELYKELD…EEEEEEGNDT (145 aa). Residues 630–647 are compositionally biased toward acidic residues; it reads EETDETTEEEEEEEEEGN.

Its subcellular location is the virion. This Acidianus two-tailed virus (ATV) protein is Structural protein ORF653.